The following is a 316-amino-acid chain: GPI-specific phospholipase A2-like PGAP3 (316 aa).

An N-terminal signal peptide occupies residues 1–19 (MFLAAAAFLLSAPASASQG). The Lumenal segment spans residues 20–97 (DKEPVYRDCV…GKWPFARFLC (78 aa)). The N-linked (GlcNAc...) asparagine glycan is linked to asparagine 36. Residues 98–118 (FEEPASALASLLNGLACLLML) traverse the membrane as a helical segment. Topologically, residues 119–131 (LRYRSAVPCQSPM) are cytoplasmic. Residues 132 to 152 (YHTITAFSLVSLNAWFWSTVF) form a helical membrane-spanning segment. Over 153–165 (HTRDTYLTEKMDY) the chain is Lumenal. The helical transmembrane segment at 166–186 (FCASAVILYSIYLCCVRTLGL) threads the bilayer. Over 187–194 (RRPAISSM) the chain is Cytoplasmic. The chain crosses the membrane as a helical span at residues 195–215 (VGVLLILAFTSHVSYLTFVSF). At 216 to 220 (DYGYN) the chain is on the lumenal side. The chain crosses the membrane as a helical span at residues 221–241 (MAANASIGIINLLWWLCWCWL). At 242 to 254 (NRRILPYWWRCGM) the chain is on the cytoplasmic side. The chain crosses the membrane as a helical span at residues 255-275 (VVLLLHGLALLELLDFPPLFW). The Lumenal portion of the chain corresponds to 276–278 (VLD). A helical transmembrane segment spans residues 279 to 299 (AHAVWHLSTVPVHFLFYSFLI). Over 300 to 316 (DDSLHLLNTEKPGVKLD) the chain is Cytoplasmic.

It belongs to the PGAP3 family.

The protein localises to the golgi apparatus membrane. Its function is as follows. Involved in the fatty acid remodeling steps of GPI-anchor maturation where the unsaturated acyl chain at sn-2 of inositol phosphate is replaced by a saturated stearoyl chain. May catalyze the first step of the fatty acid remodeling, by removing the unsaturated acyl chain at sn-2 of inositol phosphate, generating a lyso-GPI intermediate. The fatty acid remodeling steps is critical for the integration of GPI-APs into lipid rafts. This chain is GPI-specific phospholipase A2-like PGAP3, found in Danio rerio (Zebrafish).